The primary structure comprises 203 residues: Superoxide dismutase [Mn] (203 aa).

The Mn(2+) site is built by H31, H79, D161, and H165.

The protein belongs to the iron/manganese superoxide dismutase family. Mn(2+) is required as a cofactor.

It carries out the reaction 2 superoxide + 2 H(+) = H2O2 + O2. Functionally, destroys superoxide anion radicals which are normally produced within the cells and which are toxic to biological systems. The sequence is that of Superoxide dismutase [Mn] (sod) from Haloarcula marismortui (strain ATCC 43049 / DSM 3752 / JCM 8966 / VKM B-1809) (Halobacterium marismortui).